A 66-amino-acid polypeptide reads, in one-letter code: Large ribosomal subunit protein bL35c (66 aa).

Belongs to the bacterial ribosomal protein bL35 family.

The protein resides in the plastid. The protein localises to the chloroplast. The polypeptide is Large ribosomal subunit protein bL35c (Gracilaria tenuistipitata var. liui (Red alga)).